The following is a 76-amino-acid chain: ATGSPVAECVEYFQSWRYTDVHNGCADAVSVTVEYTHGQWAPCRVIEPGGWATFAGYGTDGNYVTGLHTCDPATPS.

Intrachain disulfides connect C9/C25 and C43/C70.

Functionally, inhibits mammalian alpha-amylases specifically but has no action on plant and microbial alpha-amylases. The protein is Alpha-amylase inhibitor Z-2685 of Streptomyces rochei (Streptomyces parvullus).